We begin with the raw amino-acid sequence, 463 residues long: Mitochondrial dynamics protein MID51 (463 aa).

Residues 1 to 23 (MAGAGERKGKKDDNGIGTAIDFV) lie on the Mitochondrial intermembrane side of the membrane. The helical transmembrane segment at 24 to 46 (LSNARLVLGVGGAAMLGIATLAV) threads the bilayer. At 47–463 (KRMYDRAISA…LSEPEVLLQT (417 aa)) the chain is on the cytoplasmic side. The dimerization stretch occupies residues 49-195 (MYDRAISAPT…LSGSLYDDLQ (147 aa)). Phosphoserine occurs at positions 55, 59, 79, and 94. A disordered region spans residues 57-77 (PTSPTRLSHSGKRSWEEPNWM). Residues 160-169 (AAVDICAELR) form an important for interaction with DNM1L region. The ADP site is built by Ser187, Ser189, and His201. The important for interaction with DNM1L stretch occupies residues 234-243 (RRENPEYFPR). Residues Ser340, Arg342, and Lys368 each coordinate ADP.

The protein belongs to the MID49/MID51 family. Homodimer. Interacts with DNM1L.

It localises to the mitochondrion outer membrane. Functionally, mitochondrial outer membrane protein which regulates mitochondrial fission/fusion dynamics. Promotes the recruitment and association of the fission mediator dynamin-related protein 1 (DNM1L) to the mitochondrial surface independently of the mitochondrial fission FIS1 and MFF proteins. Regulates DNM1L GTPase activity and DNM1L oligomerization. Binds ADP and can also bind GDP, although with lower affinity. Does not bind CDP, UDP, ATP, AMP or GTP. Inhibits DNM1L GTPase activity in the absence of bound ADP. Requires ADP to stimulate DNM1L GTPase activity and the assembly of DNM1L into long, oligomeric tubules with a spiral pattern, as opposed to the ring-like DNM1L oligomers observed in the absence of bound ADP. Does not require ADP for its function in recruiting DNM1L. This is Mitochondrial dynamics protein MID51 (Mief1) from Mus musculus (Mouse).